A 223-amino-acid polypeptide reads, in one-letter code: MNLIIGVAGRLLVGKNYCLNTQRLKHVLPDLPYDYGALEPILSAEIMQVHHGKHHAAYVNALNQAEEKVKEALAKGDTQAAVAGTKLMNFNTGGHINHTLFWEGLTAVKNSGEPNSELMTAIKKDFGSLETMIDKLNAKTIAIQGSGWGWLAYDKEMKRLQLACCPNQDLLEPTTGLIPLFCIDVWEHAYYLQYKNLRPDFVKAIWKIANWKIISDRYIKARG.

The N-terminal 24 residues, 1 to 24 (MNLIIGVAGRLLVGKNYCLNTQRL), are a transit peptide targeting the mitochondrion. 4 residues coordinate Mn(2+): H50, H98, D184, and H188.

It belongs to the iron/manganese superoxide dismutase family. In terms of assembly, homotetramer. It depends on Mn(2+) as a cofactor.

The protein resides in the mitochondrion matrix. The enzyme catalyses 2 superoxide + 2 H(+) = H2O2 + O2. Its function is as follows. Destroys superoxide anion radicals which are normally produced within the cells and which are toxic to biological systems. The chain is Superoxide dismutase [Mn], mitochondrial (sod-2) from Onchocerca volvulus.